Here is a 330-residue protein sequence, read N- to C-terminus: Glucan endo-1,3-beta-glucosidase GIII (330 aa).

The signal sequence occupies residues 1-25; that stretch reads MARKGVDVAVALVLVALAAFPAVHS. Residue Glu117 is the Proton donor of the active site. Glu255 acts as the Nucleophile in catalysis.

The protein belongs to the glycosyl hydrolase 17 family.

The enzyme catalyses Hydrolysis of (1-&gt;3)-beta-D-glucosidic linkages in (1-&gt;3)-beta-D-glucans.. May provide a degree of protection against microbial invasion of germinated barley grain through its ability to degrade fungal cell wall polysaccharides. This chain is Glucan endo-1,3-beta-glucosidase GIII, found in Hordeum vulgare (Barley).